The following is a 320-amino-acid chain: GTPase Era (320 aa).

Residues 25–193 (HCGFIAIVGR…RKHVRNHLPK (169 aa)) form the Era-type G domain. The segment at 33 to 40 (GRPNVGKS) is G1. Position 33–40 (33–40 (GRPNVGKS)) interacts with GTP. The segment at 59–63 (QTTRH) is G2. The interval 80 to 83 (DTPG) is G3. Residues 80 to 84 (DTPGL) and 142 to 145 (NKVD) contribute to the GTP site. The interval 142 to 145 (NKVD) is G4. The G5 stretch occupies residues 172-174 (ISA). The 87-residue stretch at 216 to 302 (VREKLMRFTG…YLETWVKVKS (87 aa)) folds into the KH type-2 domain.

The protein belongs to the TRAFAC class TrmE-Era-EngA-EngB-Septin-like GTPase superfamily. Era GTPase family. In terms of assembly, monomer.

It localises to the cytoplasm. The protein localises to the cell inner membrane. An essential GTPase that binds both GDP and GTP, with rapid nucleotide exchange. Plays a role in 16S rRNA processing and 30S ribosomal subunit biogenesis and possibly also in cell cycle regulation and energy metabolism. The protein is GTPase Era of Vibrio parahaemolyticus serotype O3:K6 (strain RIMD 2210633).